Consider the following 195-residue polypeptide: Apoptosis-associated speck-like protein containing a CARD (195 aa).

The Pyrin domain occupies 1–91 (MGCTRDAILD…AEQLQETMSK (91 aa)). Residues Lys55 and Lys174 each participate in a glycyl lysine isopeptide (Lys-Gly) (interchain with G-Cter in ubiquitin) cross-link. The CARD domain maps to 107–195 (TAKPGLHFVD…PYLVDDLEQS (89 aa)). The residue at position 195 (Ser195) is a Phosphoserine.

As to quaternary structure, self-associates; enforced oligomerization induces apoptosis, NF-kappa-B regulation and interleukin-1 beta secretion. Homooligomers can form disk-like particles of approximately 12 nm diameter and approximately 1 nm height. Component of several inflammasomes containing one pattern recognition receptor/sensor, such as NLRP1, NLRP2, NLRP3, NLRP6, NLRC4, AIM2, MEFV or NOD2, and probably NLRC4 or NLRP12. Major component of the ASC pyroptosome, a 1-2 um supramolecular assembly (one per macrophage cell) which consists of oligomerized PYCARD dimers and CASP1. Interacts with CASP1 (precursor form); the interaction induces activation of CASP1 leading to the processing of interleukin-1 beta; PYCARD competes with RIPK2 for binding to CASP1. Interacts with NLRP3; the interaction requires the homooligomerization of NLRP3. Interacts with NLRP2, NLRC4, MEFV, CARD16, AIM2, NOD2, RIGI, RIPK2, PYDC1, PYDC2, NLRP10, CASP8, CHUK, IKBKB and BAX. Component of the AIM2 PANoptosome complex, a multiprotein complex that drives inflammatory cell death (PANoptosis). In terms of processing, phosphorylated. Post-translationally, 'Lys-63'-linked polyubiquitination by TRAF3 is critical for speck formation and inflammasome activation. 'Lys-63'-linked deubiquitinated by USP50; a crucial step for NLRP3-mediated inflammasome activation. 'Lys-63'-linked polyubiquitination by PELI1 is also critical for speck formation and inflammasome activation. Deubiquitinated by USP3 that cleaves 'Lys-48'-linked ubiquitin chains and strengthens its stability by blocking proteasomal degradation.

The protein localises to the cytoplasm. Its subcellular location is the inflammasome. It localises to the endoplasmic reticulum. It is found in the mitochondrion. The protein resides in the nucleus. Its function is as follows. Functions as a key mediator in apoptosis and inflammation. Promotes caspase-mediated apoptosis involving predominantly caspase-8 and also caspase-9 in a probable cell type-specific manner. Involved in activation of the mitochondrial apoptotic pathway, promotes caspase-8-dependent proteolytic maturation of BID independently of FADD in certain cell types and also mediates mitochondrial translocation of BAX and activates BAX-dependent apoptosis coupled to activation of caspase-9, -2 and -3. Involved in innate immune response by acting as an integral adapter in the assembly of various inflammasomes (NLRP2, NLRP3, NLRP6 and AIM2) which recruit and activate caspase-1 leading to processing and secretion of pro-inflammatory cytokines. Caspase-1-dependent inflammation leads to macrophage pyroptosis, a form of cell death. The function as activating adapter in different types of inflammasomes is mediated by the pyrin and CARD domains and their homotypic interactions. Clustered PYCARD nucleates the formation of caspase-1 filaments through the interaction of their respective CARD domains, acting as a platform for of caspase-1 polymerization. In the NLRC4 inflammasomes seems not be required but facilitates the processing of procaspase-1. In cooperation with NOD2 involved in an inflammasome activated by bacterial muramyl dipeptide leading to caspase-1 activation. May be involved in RIGI-triggered pro-inflammatory responses and inflammasome activation. In collaboration with AIM2 which detects cytosolic double-stranded DNA may also be involved in a caspase-1-independent cell death that involves caspase-8. In adaptive immunity may be involved in maturation of dendritic cells to stimulate T-cell immunity and in cytoskeletal rearrangements coupled to chemotaxis and antigen uptake may be involved in post-transcriptional regulation of the guanine nucleotide exchange factor DOCK2; the latter function is proposed to involve the nuclear form. Also involved in transcriptional activation of cytokines and chemokines independent of the inflammasome; this function may involve AP-1, NF-kappa-B, MAPK and caspase-8 signaling pathways. For regulation of NF-kappa-B activating and inhibiting functions have been reported. Modulates NF-kappa-B induction at the level of the IKK complex by inhibiting kinase activity of CHUK and IKBK. Proposed to compete with RIPK2 for association with CASP1 thereby down-regulating CASP1-mediated RIPK2-dependent NF-kappa-B activation and activating interleukin-1 beta processing. Modulates host resistance to DNA virus infection, probably by inducing the cleavage of and inactivating CGAS in presence of cytoplasmic double-stranded DNA. The polypeptide is Apoptosis-associated speck-like protein containing a CARD (PYCARD) (Bos taurus (Bovine)).